Here is a 137-residue protein sequence, read N- to C-terminus: uncharacterized protein (137 aa).

The chain crosses the membrane as a helical span at residues 4–21 (ISWQIVLAVIGVVAGFII).

Its subcellular location is the membrane. This is an uncharacterized protein from Archaeoglobus fulgidus (strain ATCC 49558 / DSM 4304 / JCM 9628 / NBRC 100126 / VC-16).